A 223-amino-acid polypeptide reads, in one-letter code: Glycerol-3-phosphate acyltransferase (223 aa).

A run of 5 helical transmembrane segments spans residues 2 to 22 (LEIL…GLVI), 52 to 72 (WGVA…WLAF), 78 to 98 (PVFV…SCFM), 112 to 132 (IFLP…MLVI), and 153 to 173 (LAVS…AVVV). The segment at 191–223 (WLKSKNKGAAAGNAAEGDDTQNMNPQDAGRKDG) is disordered.

Belongs to the PlsY family. As to quaternary structure, probably interacts with PlsX.

It is found in the cell inner membrane. The enzyme catalyses an acyl phosphate + sn-glycerol 3-phosphate = a 1-acyl-sn-glycero-3-phosphate + phosphate. It participates in lipid metabolism; phospholipid metabolism. Catalyzes the transfer of an acyl group from acyl-phosphate (acyl-PO(4)) to glycerol-3-phosphate (G3P) to form lysophosphatidic acid (LPA). This enzyme utilizes acyl-phosphate as fatty acyl donor, but not acyl-CoA or acyl-ACP. This Desulfovibrio desulfuricans (strain ATCC 27774 / DSM 6949 / MB) protein is Glycerol-3-phosphate acyltransferase.